The sequence spans 301 residues: Uricase-2 isozyme 2 (301 aa).

Residues K17 and T63 each act as charge relay system in the active site. T63, D64, F165, R182, V237, Q238, and N257 together coordinate urate. Residue H259 is the Charge relay system of the active site. The Microbody targeting signal signature appears at 299–301; that stretch reads SKL.

Belongs to the uricase family.

It localises to the peroxisome. The enzyme catalyses urate + O2 + H2O = 5-hydroxyisourate + H2O2. The protein operates within purine metabolism; urate degradation; (S)-allantoin from urate: step 1/3. Functionally, catalyzes the oxidation of uric acid to 5-hydroxyisourate, which is further processed to form (S)-allantoin. This is Uricase-2 isozyme 2 from Canavalia lineata (Beach bean).